Reading from the N-terminus, the 200-residue chain is ATP synthase subunit s, mitochondrial (200 aa).

The N-terminal 25 residues, 1 to 25, are a transit peptide targeting the mitochondrion; sequence MMLFGKISQQLCGLKKLPWSRDSRY. The tract at residues 1-61 is N-terminal domain; it reads MMLFGKISQQ…SEWLLRCGAM (61 aa). Residue glycine 59 participates in Mg(2+) binding. 4 LRR repeats span residues 62 to 87, 88 to 116, 117 to 141, and 142 to 173; these read VRYH…KYKI, QAID…KIRL, CKCH…KSML, and EMEI…LSDL. Threonine 93 contributes to the Mg(2+) binding site.

This sequence belongs to the ATP synthase subunit s family. As to quaternary structure, homotetramer. Associates with ATP synthase.

The protein resides in the mitochondrion. The protein localises to the mitochondrion inner membrane. In terms of biological role, involved in regulation of mitochondrial membrane ATP synthase. Necessary for H(+) conduction of ATP synthase. Facilitates energy-driven catalysis of ATP synthesis by blocking a proton leak through an alternative proton exit pathway. The sequence is that of ATP synthase subunit s, mitochondrial (DMAC2L) from Bos taurus (Bovine).